A 461-amino-acid polypeptide reads, in one-letter code: L-seryl-tRNA(Sec) selenium transferase (461 aa).

The residue at position 294 (K294) is an N6-(pyridoxal phosphate)lysine.

Belongs to the SelA family. Requires pyridoxal 5'-phosphate as cofactor.

It is found in the cytoplasm. The enzyme catalyses L-seryl-tRNA(Sec) + selenophosphate + H(+) = L-selenocysteinyl-tRNA(Sec) + phosphate. Its pathway is aminoacyl-tRNA biosynthesis; selenocysteinyl-tRNA(Sec) biosynthesis; selenocysteinyl-tRNA(Sec) from L-seryl-tRNA(Sec) (bacterial route): step 1/1. In terms of biological role, converts seryl-tRNA(Sec) to selenocysteinyl-tRNA(Sec) required for selenoprotein biosynthesis. This chain is L-seryl-tRNA(Sec) selenium transferase, found in Haemophilus influenzae (strain PittEE).